The chain runs to 151 residues: Large ribosomal subunit protein uL15 (151 aa).

The protein belongs to the universal ribosomal protein uL15 family. As to quaternary structure, part of the 50S ribosomal subunit.

Its function is as follows. Binds to the 23S rRNA. This is Large ribosomal subunit protein uL15 from Hyperthermus butylicus (strain DSM 5456 / JCM 9403 / PLM1-5).